Consider the following 298-residue polypeptide: MTYSTTKSVAMNPDEDAPPSDINSSGRLMSHSEVEPRGNGYEVLQQAGTVRILLSRPERGNALSLSLARDLTRLFQTFSAQHSVHRIVLTGKGKYFCSGMDLGEELYEDATERCLALQDLFGAIDACPKTTVAVINGPAFGGGVGLAFVCDIRVAVSTSFFCLSEVKLGLCPATVSRFIIREWGVSLARMAMLTARKIHPQALQEMGVLHAVALDEEALKVVTENLLDDLGFAAPQASAWCKALTRKTRNGNGDHDQFARQIFETMVAPGSESEYGVAQFRRGRKNIRWEQAECLHTR.

The tract at residues 1–39 is disordered; that stretch reads MTYSTTKSVAMNPDEDAPPSDINSSGRLMSHSEVEPRGN.

It belongs to the enoyl-CoA hydratase/isomerase family.

It carries out the reaction a (3S)-3-hydroxyacyl-CoA = a (2E)-enoyl-CoA + H2O. The enzyme catalyses a 4-saturated-(3S)-3-hydroxyacyl-CoA = a (3E)-enoyl-CoA + H2O. It functions in the pathway mycotoxin biosynthesis. In terms of biological role, enoyl-CoA hydratase; part of the gene clusters that mediate the biosynthesis of the host-selective toxins (HSTs) AF-toxins responsible for Alternaria black spot of strawberry disease by the strawberry pathotype. AF-toxin I and III are valine derivatives of 2,3-dyhydroxy-isovaleric acid and 2-hydroxy-isovaleric acid respectively, while AF II is an isoleucine derivative of 2-hydroxy-valeric acid. These derivatives are bound to a 9,10-epoxy-8-hydroxy-9-methyl-decatrienoic acid (EDA) moiety. On cellular level, AF-toxin affects plasma membrane of susceptible cells and cause a sudden increase in loss of K(+) after a few minutes of toxin treatment. The aldo-keto reductase AFTS1 catalyzes the conversion of 2-keto-isovaleric acid (2-KIV) to 2-hydroxy-isovaleric acid (2-HIV) by reduction of its ketone to an alcohol. The acyl-CoA ligase AFT1, the hydrolase AFT2 and the enoyl-CoA hydratases AFT3 and AFT6, but also the polyketide synthase AFT9, the acyl-CoA dehydrogenase AFT10, the cytochrome P450 monooxygenase AFT11 and the oxidoreductase AFT12 are all involved in the biosynthesis of the AK-, AF- and ACT-toxin common EDA structural moiety. The exact function of each enzyme, and of additional enzymes identified within the AF-toxin clusters have still to be determined. In Alternaria alternata (Alternaria rot fungus), this protein is Enoyl-CoA hydratase AFT6-1.